The sequence spans 220 residues: Claudin-22 (220 aa).

Residues 1 to 10 are Cytoplasmic-facing; that stretch reads MGLVFRTATQ. Residues 11-31 form a helical membrane-spanning segment; that stretch reads AAALLLSLLGWVLSCLTNYLP. Residues 32–81 are Extracellular-facing; it reads HWKNLNLELNEMENWTMGLWKSCVIQEEVGRQCKDFDSFLALPAELQVSR. The chain crosses the membrane as a helical span at residues 82–102; the sequence is VLMSLCNGLGLLGLLASGCGL. The Cytoplasmic segment spans residues 103 to 120; that stretch reads DCLRLGETQEGLKKRLLT. Residues 121–141 traverse the membrane as a helical segment; it reads LGGTLLWTSGVMVLVPVSWVA. The Extracellular portion of the chain corresponds to 142 to 164; that stretch reads HKTVREFWDETMPEIVPRWEFGE. Residues 165–185 form a helical membrane-spanning segment; that stretch reads ALFLGWFAGFCLVLGGCVLHC. Topologically, residues 186 to 220 are cytoplasmic; sequence AACWSPAPAASSHYAVAGPRDHQQHLELKQANPEI.

It belongs to the claudin family.

The protein resides in the cell junction. It localises to the tight junction. It is found in the cell membrane. Functionally, plays a major role in tight junction-specific obliteration of the intercellular space, through calcium-independent cell-adhesion activity. This is Claudin-22 (Cldn22) from Mus musculus (Mouse).